A 161-amino-acid polypeptide reads, in one-letter code: Lipoprotein LpqH (161 aa).

Positions 1-21 (MNRQLRFAVAGPEILAAVVSG) are cleaved as a signal peptide. Residues 21-46 (GCSSGNKSAPSSSASSSSTSPSASSG) are compositionally biased toward low complexity. Positions 21–49 (GCSSGNKSAPSSSASSSSTSPSASSGGAA) are disordered. Cysteine 22 carries N-palmitoyl cysteine lipidation. Cysteine 22 carries S-diacylglycerol cysteine lipidation.

Belongs to the mycobacterial 19 kDa antigen family. Modified by Lgt on Cys-22 with an S-linked diacylglycerol with a mixture of C16, C18 and C19 fatty acids, signal peptide is removed by LspA, modifed by Lnt with an amide-linked mixture of C16 and C19 fatty acids.

The protein localises to the cell membrane. In terms of biological role, might be involved in ligand transport. A host TLR2 agonist, modifies host gene expression in response to pathogen. The protein is Lipoprotein LpqH (lpqH) of Mycobacterium avium.